The sequence spans 229 residues: Protein 33K (229 aa).

The tract at residues 1–157 (MAPKKKLQLP…GALRLAPNEP (157 aa)) is disordered. Residues 14–54 (TDEEEYWDSQAEEVLDEEEEDMMEDWESLDEEASEVEEVSD) show a composition bias toward acidic residues. 3 stretches are compositionally biased toward low complexity: residues 55–64 (ETPSPSVAFP), 71–82 (SATGSSMATTSA), and 100–122 (TTGT…AAAT). The tract at residues 172–199 (YAIFQQSRGQEQELKIKNRSLRSLTRSC) is necessary for nuclear subcellular location. The RS-repeat; required for splicing enhancer activity stretch occupies residues 178-198 (SRGQEQELKIKNRSLRSLTRS).

Belongs to the adenoviridae splicing factor family. As to quaternary structure, homooligomer. Interacts with DBP; this interaction occurs at a unique vertex during genome packaging. Interacts with IVa2; this interaction occurs at a unique vertex during genome packaging and seems to potentiate IVa2 and 33K oligomerization. Phosphorylated in vitro by human PKA and PRKDC. PRKDC inhibits, whereas PKA activates the splicing factor.

It localises to the host nucleus. Promotes alternative splicing of late transcripts by promoting splicing at weak 3' splice sites. Required for the temporal activation of major late pre-mRNA splicing at late times of infection. Induces the splicing and expression of the late capsid vertex protein. Its function is as follows. Probably functions as the small terminase that is part of the molecular motor that translocates genomic DNA in empty capsid during DNA packaging. This motor is located at a unique vertex and comprises at least the IVa2 ATPase, the small terminase 33K and probably a portal. Forms a ring-like structure of about 17 nm in which genomic DNA is translocated into the capsid. Stimulates IVa2 ATPase activity in the presence of the viral genome. Once the DNA is packaged, the terminase detaches: the 33K protein is present in the empty particles, but not in the mature virions. Also involved in virion assembly. This is Protein 33K from Homo sapiens (Human).